The chain runs to 2176 residues: Protein eyes shut (2176 aa).

At Met1–Arg122 the chain is on the cytoplasmic side. The helical transmembrane segment at Ile123–Gln143 threads the bilayer. Positions Ala144–Gln180 constitute an EGF-like 1 domain. Over Ala144–Val2176 the chain is Extracellular. Cystine bridges form between Cys148–Cys158, Cys153–Cys168, Cys170–Cys179, Cys186–Cys197, Cys191–Cys206, Cys208–Cys217, Cys224–Cys235, Cys229–Cys244, Cys246–Cys255, Cys262–Cys276, Cys270–Cys286, Cys288–Cys297, Cys304–Cys315, Cys309–Cys324, Cys326–Cys335, Cys342–Cys353, Cys347–Cys362, Cys364–Cys373, Cys380–Cys392, Cys386–Cys401, and Cys403–Cys412. N-linked (GlcNAc...) asparagine glycosylation is present at Asn163. Residues Asn182–Glu218 form the EGF-like 2; calcium-binding domain. Residue Asn205 is glycosylated (N-linked (GlcNAc...) asparagine). The 37-residue stretch at Asn220–Glu256 folds into the EGF-like 3; calcium-binding domain. The EGF-like 4 domain maps to Asp258–Gln298. The EGF-like 5; calcium-binding domain maps to Glu300–Glu336. An EGF-like 6 domain is found at Glu338–Glu374. The 38-residue stretch at Gln376 to Glu413 folds into the EGF-like 7; calcium-binding domain. Asn425 is a glycosylation site (N-linked (GlcNAc...) asparagine). Composition is skewed to low complexity over residues Pro429–Pro447 and Val482–Glu502. Disordered regions lie at residues Pro429–Ser465, Val482–Ala639, Arg757–Pro783, Leu802–Thr854, and Ala902–Glu1014. Positions Gly514–Val526 are enriched in polar residues. Residues Ser548–Ile560 show a composition bias toward acidic residues. 2 stretches are compositionally biased toward low complexity: residues Thr564–Ser582 and Thr596–Val632. Positions Arg757–Asp775 are enriched in polar residues. Over residues Thr811–His820 the composition is skewed to basic residues. Pro residues-rich tracts occupy residues Pro904–Pro922 and Thr930–Pro955. The EGF-like 8 domain occupies Gly1018–Glu1054. Cystine bridges form between Cys1022–Cys1033, Cys1027–Cys1042, and Cys1044–Cys1053. Residues Ile1059–Cys1266 enclose the Laminin G-like 1 domain. 3 N-linked (GlcNAc...) asparagine glycosylation sites follow: Asn1165, Asn1170, and Asn1176. The EGF-like 9 domain occupies Glu1309–Glu1346. Disulfide bonds link Cys1313–Cys1324, Cys1318–Cys1334, and Cys1336–Cys1345. Residues Leu1353–Cys1549 enclose the Laminin G-like 2 domain. The N-linked (GlcNAc...) asparagine glycan is linked to Asn1471. 2 EGF-like domains span residues Gly1545–Ala1581 and Pro1583–Glu1621. 6 cysteine pairs are disulfide-bonded: Cys1549–Cys1560, Cys1554–Cys1569, Cys1571–Cys1580, Cys1587–Cys1600, Cys1594–Cys1609, and Cys1611–Cys1620. Asn1665 and Asn1861 each carry an N-linked (GlcNAc...) asparagine glycan. A Laminin G-like 3 domain is found at Glu1692–Cys1879. 2 EGF-like domains span residues Asp1875–Glu1912 and Tyr1913–Glu1946. Disulfide bonds link Cys1879-Cys1890, Cys1884-Cys1900, Cys1902-Cys1911, Cys1917-Cys1928, Cys1922-Cys1934, and Cys1936-Cys1945. One can recognise a Laminin G-like 4 domain in the interval Pro1952–Cys2166. Asn1994, Asn2035, and Asn2099 each carry an N-linked (GlcNAc...) asparagine glycan. Residues Gly2080–Ser2101 are disordered.

It belongs to the EYS family. In terms of tissue distribution, expressed from the beginning of rhabdomere biogenesis (48 hours after pupal formation), when it decorates the entire photoreceptor apical surface.

It localises to the membrane. It is found in the secreted. Functionally, essential for the formation of matrix-filled interrhabdomeral space: critical for the formation of epithelial lumina in the retina. Acts together with prominin (prom) and the cell adhesion molecule chaoptin (chp) to choreograph the partitioning of rhabdomeres into an open system. This Drosophila melanogaster (Fruit fly) protein is Protein eyes shut.